The chain runs to 435 residues: MKRRASDRGAGETSARAKALGSGISGNNAKRAGPFILGPRLGNSPVPSIVQCLARKDGTDDFYQLKILTLEERGDQGIESQEERQGKMLLHTEYSLLSLLHTQDGVVHHHGLFQDRTCEIVEDTESSRMVKKMKKRICLVLDCLCAHDFSDKTADLINLQHYVIKEKRLSERETVVIFYDVVRVVEALHQKNIVHRDLKLGNMVLNKRTHRITITNFCLGKHLVSEGDLLKDQRGSPAYISPDVLSGRPYRGKPSDMWALGVVLFTMLYGQFPFYDSIPQELFRKIKAAEYTIPEDGRVSENTVCLIRKLLVLDPQQRLAAADVLEALSAIIASWQSLSSLSGPLQVVPDIDDQMSNADSSQEAKVTEECSQYEFENYMRQQLLLAEEKSSIHDARSWVPKRQFGSAPPVRRLGHDAQPMTSLDTAILAQRYLRK.

Basic and acidic residues predominate over residues 1–10; the sequence is MKRRASDRGA. The tract at residues 1-25 is disordered; the sequence is MKRRASDRGAGETSARAKALGSGIS. Positions 35–331 constitute a Protein kinase domain; the sequence is FILGPRLGNS…ADVLEALSAI (297 aa). ATP contacts are provided by residues 41-49 and K66; that span reads LGNSPVPSI. The active-site Proton acceptor is R196.

The protein belongs to the protein kinase superfamily. CAMK Ser/Thr protein kinase family. In terms of tissue distribution, strongly expressed in heart, brain, placenta, lung, skeletal muscle, kidney, spleen, thymus, prostate, liver, pancreas, testis, ovary, small intestine, colon and peripheral blood leukocytes.

Its subcellular location is the nucleus. It localises to the cytoplasm. It catalyses the reaction L-seryl-[protein] + ATP = O-phospho-L-seryl-[protein] + ADP + H(+). The enzyme catalyses L-threonyl-[protein] + ATP = O-phospho-L-threonyl-[protein] + ADP + H(+). Its function is as follows. May be a negative regulator of NF-kappa-B and p53-mediated gene transcription. In Homo sapiens (Human), this protein is Serine/threonine-protein kinase 40 (STK40).